The following is a 307-amino-acid chain: Probable acetylxylan esterase A (307 aa).

An N-terminal signal peptide occupies residues 1-19 (MILLSYLLTYLLCALTCSA). Residue serine 150 is the Charge relay system of the active site. Residues asparagine 192 and asparagine 270 are each glycosylated (N-linked (GlcNAc...) asparagine).

Belongs to the carbohydrate esterase 1 (CE1) family. AxeA subfamily. Monomer.

The protein localises to the secreted. It catalyses the reaction Deacetylation of xylans and xylo-oligosaccharides.. It functions in the pathway glycan degradation; xylan degradation. In terms of biological role, acetylxylan esterase involved in the hydrolysis of xylan, a major structural heterogeneous polysaccharide found in plant biomass representing the second most abundant polysaccharide in the biosphere, after cellulose. Degrades acetylated xylans by cleaving acetyl side groups from the hetero-xylan backbone. The sequence is that of Probable acetylxylan esterase A (axeA) from Aspergillus flavus.